Reading from the N-terminus, the 22-residue chain is Peptide PGLa-R1 (22 aa).

Leucine 22 carries the leucine amide modification.

In terms of tissue distribution, expressed by the skin glands.

The protein localises to the secreted. In terms of biological role, antimicrobial peptide. The polypeptide is Peptide PGLa-R1 (Xenopus ruwenzoriensis (Uganda clawed frog)).